Reading from the N-terminus, the 1265-residue chain is Methionine synthase (1265 aa).

A Hcy-binding domain is found at 19 to 338; that stretch reads QDEIEAILQE…DHIREIAEAV (320 aa). Zn(2+) is bound by residues cysteine 260, cysteine 323, and cysteine 324. In terms of domain architecture, Pterin-binding spans 371 to 632; the sequence is FVNIGERCNV…IHKELLQLCE (262 aa). Residues 382–384, aspartate 449, asparagine 470, aspartate 537, asparagine 579, arginine 585, and arginine 591 contribute to the (6S)-5,6,7,8-tetrahydrofolate site; that span reads GSR. The B12-binding N-terminal domain occupies 662 to 759; the sequence is QTDEWRNGPL…FMEKEREETK (98 aa). Methylcob(III)alamin contacts are provided by residues glutamate 709, 782 to 786, histidine 785, serine 830, threonine 834, and alanine 886; that span reads GDVHD. Residues 772–907 form the B12-binding domain; the sequence is QGTIVLATVK…DENLKDEYFE (136 aa). Positions 923-1265 constitute an AdoMet activation domain; the sequence is SLKERRYLTL…LGPILGYDTD (343 aa). Residues aspartate 974, arginine 1172, and 1227–1228 contribute to the S-adenosyl-L-methionine site; that span reads YF. At threonine 1264 the chain carries Phosphothreonine.

The protein belongs to the vitamin-B12 dependent methionine synthase family. Monomer. Dimer. Forms a multiprotein complex with MMACHC, MMADHC and MTRR. Methylcob(III)alamin is required as a cofactor. Requires Zn(2+) as cofactor.

It localises to the cytoplasm. The enzyme catalyses (6S)-5-methyl-5,6,7,8-tetrahydrofolate + L-homocysteine = (6S)-5,6,7,8-tetrahydrofolate + L-methionine. It participates in amino-acid biosynthesis; L-methionine biosynthesis via de novo pathway; L-methionine from L-homocysteine (MetH route): step 1/1. Its function is as follows. Catalyzes the transfer of a methyl group from methylcob(III)alamin (MeCbl) to homocysteine, yielding enzyme-bound cob(I)alamin and methionine in the cytosol. MeCbl is an active form of cobalamin (vitamin B12) used as a cofactor for methionine biosynthesis. Cob(I)alamin form is regenerated to MeCbl by a transfer of a methyl group from 5-methyltetrahydrofolate. The processing of cobalamin in the cytosol occurs in a multiprotein complex composed of at least MMACHC, MMADHC, MTRR (methionine synthase reductase) and MTR which may contribute to shuttle safely and efficiently cobalamin towards MTR in order to produce methionine. This chain is Methionine synthase (MTR), found in Bos taurus (Bovine).